We begin with the raw amino-acid sequence, 512 residues long: Maturase K (512 aa).

The protein belongs to the intron maturase 2 family. MatK subfamily.

Its subcellular location is the plastid. It is found in the chloroplast. Functionally, usually encoded in the trnK tRNA gene intron. Probably assists in splicing its own and other chloroplast group II introns. This chain is Maturase K, found in Lilium henryi (Henry's lily).